A 162-amino-acid polypeptide reads, in one-letter code: Protein-export protein SecB (162 aa).

It belongs to the SecB family. In terms of assembly, homotetramer, a dimer of dimers. One homotetramer interacts with 1 SecA dimer.

It localises to the cytoplasm. Functionally, one of the proteins required for the normal export of preproteins out of the cell cytoplasm. It is a molecular chaperone that binds to a subset of precursor proteins, maintaining them in a translocation-competent state. It also specifically binds to its receptor SecA. In Bradyrhizobium sp. (strain BTAi1 / ATCC BAA-1182), this protein is Protein-export protein SecB.